The chain runs to 340 residues: 4-dimethylallyltryptophan N-methyltransferase easF (340 aa).

It belongs to the methyltransferase superfamily. Homodimer.

It catalyses the reaction 4-(3-methylbut-2-enyl)-L-tryptophan + S-adenosyl-L-methionine = 4-(3-methylbut-2-enyl)-L-abrine + S-adenosyl-L-homocysteine + H(+). The protein operates within alkaloid biosynthesis; ergot alkaloid biosynthesis. 4-dimethylallyltryptophan N-methyltransferase; part of the gene cluster that mediates the biosynthesis of fungal ergot alkaloid. DmaW catalyzes the first step of ergot alkaloid biosynthesis by condensing dimethylallyl diphosphate (DMAP) and tryptophan to form 4-dimethylallyl-L-tryptophan. The second step is catalyzed by the methyltransferase easF that methylates 4-dimethylallyl-L-tryptophan in the presence of S-adenosyl-L-methionine, resulting in the formation of 4-dimethylallyl-L-abrine. The catalase easC and the FAD-dependent oxidoreductase easE then transform 4-dimethylallyl-L-abrine to chanoclavine-I which is further oxidized by easD in the presence of NAD(+), resulting in the formation of chanoclavine-I aldehyde. Chanoclavine-I aldehyde is the precursor of ergoamides and ergopeptines in Clavicipitaceae, and clavine-type alcaloids such as fumiclavine in Trichocomaceae. However, the metabolites downstream of chanoclavine-I aldehyde in Arthrodermataceae have not been identified yet. The protein is 4-dimethylallyltryptophan N-methyltransferase easF of Arthroderma benhamiae (strain ATCC MYA-4681 / CBS 112371) (Trichophyton mentagrophytes).